The following is a 294-amino-acid chain: 2,4-diacetylphloroglucinol hydrolase (294 aa).

4 residues coordinate Zn(2+): H129, E160, H270, and E274.

The protein belongs to the DAPG/phloretin hydrolase family. As to quaternary structure, homodimer. It depends on Zn(2+) as a cofactor.

It catalyses the reaction 2,4-diacetylphloroglucinol + H2O = 2-acetylphloroglucinol + acetate. Its activity is regulated as follows. Specifically and significantly activated by CoCl(2). Competitively inhibited by MAPG, but not by 2-hydroxy- and 4-hydroxyacetophenone. Functionally, hydrolase that specifically degrades the potent antimicrobial compound 2,4-diacetylphloroglucinol (DAPG) to equimolar amounts of mildly toxic monoacetylphloroglucinol (MAPG) and acetate. This Pseudomonas sp protein is 2,4-diacetylphloroglucinol hydrolase.